We begin with the raw amino-acid sequence, 365 residues long: Nudix hydrolase 24, chloroplastic (365 aa).

The N-terminal 30 residues, 1–30, are a transit peptide targeting the chloroplast; sequence MASAFCSLCPTPTSLFSSHALIPTLQWRSS. The 142-residue stretch at 196 to 337 folds into the Nudix hydrolase domain; the sequence is GYAIHVNGYV…KDSCSLVIID (142 aa). Residues 235–256 carry the Nudix box motif; it reads GGLPHGISVCENLVKECEEEAG. Residues Glu-250 and Glu-254 each coordinate Mg(2+).

It belongs to the Nudix hydrolase family. The cofactor is Mg(2+). It depends on Mn(2+) as a cofactor. Expressed in leaves.

The protein resides in the plastid. It is found in the chloroplast. Its function is as follows. Probably mediates the hydrolysis of some nucleoside diphosphate derivatives. This is Nudix hydrolase 24, chloroplastic (NUDT24) from Arabidopsis thaliana (Mouse-ear cress).